We begin with the raw amino-acid sequence, 457 residues long: uncharacterized protein (457 aa).

A TRAM domain is found at 6-64 (PVHKGEVLDVTIMDLTYQGMGVAKVDNYPIFIENALPEEKITVKVTKTTKNFAFGDVEK). Positions 287, 316, 337, and 385 each coordinate S-adenosyl-L-methionine. The active-site Nucleophile is the Cys-412.

It belongs to the class I-like SAM-binding methyltransferase superfamily. RNA M5U methyltransferase family.

This is an uncharacterized protein from Lactiplantibacillus plantarum (strain ATCC BAA-793 / NCIMB 8826 / WCFS1) (Lactobacillus plantarum).